The chain runs to 205 residues: Small ribosomal subunit protein uS4 (205 aa).

The segment at Asn18–Ser46 is disordered. The S4 RNA-binding domain maps to Ser94 to Glu155.

It belongs to the universal ribosomal protein uS4 family. Part of the 30S ribosomal subunit. Contacts protein S5. The interaction surface between S4 and S5 is involved in control of translational fidelity.

In terms of biological role, one of the primary rRNA binding proteins, it binds directly to 16S rRNA where it nucleates assembly of the body of the 30S subunit. Functionally, with S5 and S12 plays an important role in translational accuracy. This is Small ribosomal subunit protein uS4 from Phenylobacterium zucineum (strain HLK1).